The chain runs to 79 residues: Cell division protein ZapB (79 aa).

The stretch at 4-78 (EVFEKLEAKV…LRALLGKMEE (75 aa)) forms a coiled coil.

This sequence belongs to the ZapB family. Homodimer. The ends of the coiled-coil dimer bind to each other, forming polymers. Interacts with FtsZ.

It localises to the cytoplasm. In terms of biological role, non-essential, abundant cell division factor that is required for proper Z-ring formation. It is recruited early to the divisome by direct interaction with FtsZ, stimulating Z-ring assembly and thereby promoting cell division earlier in the cell cycle. Its recruitment to the Z-ring requires functional FtsA or ZipA. This chain is Cell division protein ZapB, found in Pectobacterium atrosepticum (strain SCRI 1043 / ATCC BAA-672) (Erwinia carotovora subsp. atroseptica).